The sequence spans 464 residues: ATP-dependent protease ATPase subunit HslU (464 aa).

ATP is bound by residues valine 18, 60–65 (GVGKTE), aspartate 277, glutamate 342, and arginine 414.

It belongs to the ClpX chaperone family. HslU subfamily. As to quaternary structure, a double ring-shaped homohexamer of HslV is capped on each side by a ring-shaped HslU homohexamer. The assembly of the HslU/HslV complex is dependent on binding of ATP.

The protein resides in the cytoplasm. ATPase subunit of a proteasome-like degradation complex; this subunit has chaperone activity. The binding of ATP and its subsequent hydrolysis by HslU are essential for unfolding of protein substrates subsequently hydrolyzed by HslV. HslU recognizes the N-terminal part of its protein substrates and unfolds these before they are guided to HslV for hydrolysis. The protein is ATP-dependent protease ATPase subunit HslU of Lactobacillus delbrueckii subsp. bulgaricus (strain ATCC 11842 / DSM 20081 / BCRC 10696 / JCM 1002 / NBRC 13953 / NCIMB 11778 / NCTC 12712 / WDCM 00102 / Lb 14).